Reading from the N-terminus, the 669-residue chain is DNA ligase (669 aa).

NAD(+) contacts are provided by residues 34-38 (DAEYD), 83-84 (SL), and Glu-114. Lys-116 serves as the catalytic N6-AMP-lysine intermediate. Residues Arg-137, Glu-171, Lys-287, and Lys-311 each coordinate NAD(+). The Zn(2+) site is built by Cys-405, Cys-408, Cys-423, and Cys-428. Residues 591–669 (NIASYFAGKT…EERFLQELNK (79 aa)) form the BRCT domain.

It belongs to the NAD-dependent DNA ligase family. LigA subfamily. It depends on Mg(2+) as a cofactor. Mn(2+) serves as cofactor.

The enzyme catalyses NAD(+) + (deoxyribonucleotide)n-3'-hydroxyl + 5'-phospho-(deoxyribonucleotide)m = (deoxyribonucleotide)n+m + AMP + beta-nicotinamide D-nucleotide.. Functionally, DNA ligase that catalyzes the formation of phosphodiester linkages between 5'-phosphoryl and 3'-hydroxyl groups in double-stranded DNA using NAD as a coenzyme and as the energy source for the reaction. It is essential for DNA replication and repair of damaged DNA. The chain is DNA ligase from Bacillus cytotoxicus (strain DSM 22905 / CIP 110041 / 391-98 / NVH 391-98).